Consider the following 156-residue polypeptide: MPRRRVVGQRKILPDPKFHSELLAKFINVIMQDGKKSTAEKIIYKALDVVAEKKSEAHLSILEAALDNVRPSVEVKSRRVGGSTYQVPCEVRPVRRNALAMRWLVEAARKRGEKSMALRLAGEMLDASENKGTAVKKREDVHRMAEANKAFAHYRW.

It belongs to the universal ribosomal protein uS7 family. Part of the 30S ribosomal subunit. Contacts proteins S9 and S11.

Its function is as follows. One of the primary rRNA binding proteins, it binds directly to 16S rRNA where it nucleates assembly of the head domain of the 30S subunit. Is located at the subunit interface close to the decoding center, probably blocks exit of the E-site tRNA. This chain is Small ribosomal subunit protein uS7, found in Shewanella denitrificans (strain OS217 / ATCC BAA-1090 / DSM 15013).